The following is a 307-amino-acid chain: Taste receptor type 2 member 41 (307 aa).

Topologically, residues 1 to 7 (MQAALTA) are extracellular. The helical transmembrane segment at 8–28 (FFMLLFSLLSLLGIAANGFIV) threads the bilayer. Residues 29-40 (LVLGREWLRYGR) lie on the Cytoplasmic side of the membrane. Residues 41–61 (LLPLDMILISLGASRFCLQLV) traverse the membrane as a helical segment. The Extracellular portion of the chain corresponds to 62-88 (GTVHNFYYSAQKVEYSGGLGRQFFHLH). The chain crosses the membrane as a helical span at residues 89–109 (WHFLNSATFWFCSWLSVLFCV). Residues 110 to 129 (KIANITHPTFLWLKWRFPAW) lie on the Cytoplasmic side of the membrane. A helical membrane pass occupies residues 130-150 (VPWLLLGSVLISFIITLLFFW). The Extracellular portion of the chain corresponds to 151 to 183 (VNYPAYQEFLIRKFSVNMTYKWNTRIETYYFPS). A glycan (N-linked (GlcNAc...) asparagine) is linked at N167. A helical transmembrane segment spans residues 184–204 (LKLVIWSIPFSVFLVSIMLLI). At 205 to 234 (NSLRRHTQRMQHNGHSLQDPSTQAHTRALK) the chain is on the cytoplasmic side. The helical transmembrane segment at 235 to 255 (SLISFLILYALSFLSLIIDAT) threads the bilayer. Topologically, residues 256–264 (KFISMQNDF) are extracellular. The helical transmembrane segment at 265 to 285 (YWPWQIAVYLCISIHPFILIF) threads the bilayer. Topologically, residues 286-307 (SNLKLRSVFSQLLLLARGFWVA) are cytoplasmic.

Belongs to the G-protein coupled receptor T2R family.

The protein localises to the membrane. Functionally, receptor that may play a role in the perception of bitterness and is gustducin-linked. May play a role in sensing the chemical composition of the gastrointestinal content. The activity of this receptor may stimulate alpha gustducin, mediate PLC-beta-2 activation and lead to the gating of TRPM5. This chain is Taste receptor type 2 member 41 (TAS2R41), found in Pan paniscus (Pygmy chimpanzee).